The sequence spans 1255 residues: RNA-directed RNA polymerase (1255 aa).

Residues L548–V756 form the RdRp catalytic domain.

It localises to the virion. The enzyme catalyses RNA(n) + a ribonucleoside 5'-triphosphate = RNA(n+1) + diphosphate. Its function is as follows. RNA-directed RNA polymerase that is involved in transcription and genome replication. Following infection, it catalyzes the synthesis of fully conservative plus strands. After core assembly, which consists in recruitment of one capped plus-strand for each genomic segments and polymerase complexes, the polymerase switches mode and catalyzes the synthesis of complementary minus-strands. The sequence is that of RNA-directed RNA polymerase from Oryza latifolia (Indian wild rice).